The following is a 1232-amino-acid chain: Protein transport protein sec-16A.1 (1232 aa).

Disordered stretches follow at residues 18–134, 172–193, 815–843, 866–942, 972–1069, and 1140–1232; these read GASG…SGYA, RNGFVYDSGESDKTSEELEEDE, PVQESQQHVPQPQPVENKSISSEAKKWHD, KPIA…VVPE, QPIP…PQKQ, and PHLM…QNND. Polar residues predominate over residues 26-37; that stretch reads DWNNPYNASPPS. Positions 67–76 are enriched in low complexity; that stretch reads RPILIQPARP. The span at 78 to 100 shows a compositional bias: polar residues; that stretch reads SQKSNRQGTGMSNGSRGLNSTFN. A compositionally biased stretch (polar residues) spans 817 to 836; it reads QESQQHVPQPQPVENKSISS. Positions 896–914 are enriched in low complexity; the sequence is SSVTVAASASRTSTLTSST. Polar residues-rich tracts occupy residues 1046-1060, 1149-1159, and 1168-1178; these read QQATLGQASIPNAKT, SNKSSTNSLRS, and YLQSGMATSQA. Residues 1194–1203 are compositionally biased toward low complexity; sequence PMSFSFMPAP. Polar residues predominate over residues 1222 to 1232; the sequence is PSESLSKQNND.

The protein belongs to the SEC16 family. Interacts with tfg-1 (via N-terminus); the interaction is direct and is required for both the localization of tfg-1 and to maintain the distribution of sec-16A.1 at endoplasmic reticulum exit sites (ERES).

The protein resides in the endoplasmic reticulum. It is found in the endoplasmic reticulum-Golgi intermediate compartment. Functionally, plays a role in the organization of the endoplasmic reticulum exit sites (ERES), also known as transitional endoplasmic reticulum (tER). In association with tfg-1, accumulates at ERES to positively regulate secretory cargo trafficking from the endoplasmic reticulum to the endoplasmic reticulum-Golgi intermediate compartment (ERGIC) and Golgi apparatus. The sequence is that of Protein transport protein sec-16A.1 from Caenorhabditis elegans.